The primary structure comprises 161 residues: NADH-quinone oxidoreductase subunit I (161 aa).

4Fe-4S ferredoxin-type domains follow at residues 52–82 (LRRY…IESE) and 92–121 (SRYD…ETRV). Residues cysteine 62, cysteine 65, cysteine 68, cysteine 72, cysteine 101, cysteine 104, cysteine 107, and cysteine 111 each contribute to the [4Fe-4S] cluster site.

It belongs to the complex I 23 kDa subunit family. In terms of assembly, NDH-1 is composed of 14 different subunits. Subunits NuoA, H, J, K, L, M, N constitute the membrane sector of the complex. Requires [4Fe-4S] cluster as cofactor.

The protein resides in the cell inner membrane. The enzyme catalyses a quinone + NADH + 5 H(+)(in) = a quinol + NAD(+) + 4 H(+)(out). NDH-1 shuttles electrons from NADH, via FMN and iron-sulfur (Fe-S) centers, to quinones in the respiratory chain. The immediate electron acceptor for the enzyme in this species is believed to be ubiquinone. Couples the redox reaction to proton translocation (for every two electrons transferred, four hydrogen ions are translocated across the cytoplasmic membrane), and thus conserves the redox energy in a proton gradient. This Azoarcus sp. (strain BH72) protein is NADH-quinone oxidoreductase subunit I.